Consider the following 384-residue polypeptide: Probable L-tyrosine/L-aspartate decarboxylase (384 aa).

Lys-233 is modified (N6-(pyridoxal phosphate)lysine).

The protein belongs to the group II decarboxylase family. MfnA subfamily. Pyridoxal 5'-phosphate is required as a cofactor.

It carries out the reaction L-tyrosine + H(+) = tyramine + CO2. The catalysed reaction is L-aspartate + H(+) = beta-alanine + CO2. It functions in the pathway cofactor biosynthesis; methanofuran biosynthesis. Its pathway is cofactor biosynthesis; coenzyme A biosynthesis. Catalyzes the decarboxylation of L-tyrosine to produce tyramine for methanofuran biosynthesis. Can also catalyze the decarboxylation of L-aspartate to produce beta-alanine for coenzyme A (CoA) biosynthesis. This Methanococcus maripaludis (strain C5 / ATCC BAA-1333) protein is Probable L-tyrosine/L-aspartate decarboxylase.